A 281-amino-acid chain; its full sequence is NAD kinase (281 aa).

Asp61 functions as the Proton acceptor in the catalytic mechanism. NAD(+) is bound by residues 61–62 (DG), 134–135 (ND), Arg145, Asp164, 175–180 (TAYSLS), and Gln234.

It belongs to the NAD kinase family. A divalent metal cation is required as a cofactor.

Its subcellular location is the cytoplasm. It catalyses the reaction NAD(+) + ATP = ADP + NADP(+) + H(+). Involved in the regulation of the intracellular balance of NAD and NADP, and is a key enzyme in the biosynthesis of NADP. Catalyzes specifically the phosphorylation on 2'-hydroxyl of the adenosine moiety of NAD to yield NADP. This Clostridium botulinum (strain ATCC 19397 / Type A) protein is NAD kinase.